Consider the following 260-residue polypeptide: Pyridoxine 5'-phosphate synthase (260 aa).

Asn-15 contacts 3-amino-2-oxopropyl phosphate. 17–18 (DH) lines the 1-deoxy-D-xylulose 5-phosphate pocket. Arg-26 serves as a coordination point for 3-amino-2-oxopropyl phosphate. Catalysis depends on His-51, which acts as the Proton acceptor. 1-deoxy-D-xylulose 5-phosphate is bound by residues Arg-53 and His-58. Glu-78 (proton acceptor) is an active-site residue. Thr-108 lines the 1-deoxy-D-xylulose 5-phosphate pocket. His-199 serves as the catalytic Proton donor. 3-amino-2-oxopropyl phosphate is bound by residues Gly-200 and 221–222 (GH).

Belongs to the PNP synthase family. As to quaternary structure, homooctamer; tetramer of dimers.

It localises to the cytoplasm. The enzyme catalyses 3-amino-2-oxopropyl phosphate + 1-deoxy-D-xylulose 5-phosphate = pyridoxine 5'-phosphate + phosphate + 2 H2O + H(+). The protein operates within cofactor biosynthesis; pyridoxine 5'-phosphate biosynthesis; pyridoxine 5'-phosphate from D-erythrose 4-phosphate: step 5/5. Its function is as follows. Catalyzes the complicated ring closure reaction between the two acyclic compounds 1-deoxy-D-xylulose-5-phosphate (DXP) and 3-amino-2-oxopropyl phosphate (1-amino-acetone-3-phosphate or AAP) to form pyridoxine 5'-phosphate (PNP) and inorganic phosphate. The polypeptide is Pyridoxine 5'-phosphate synthase (Cupriavidus pinatubonensis (strain JMP 134 / LMG 1197) (Cupriavidus necator (strain JMP 134))).